Reading from the N-terminus, the 953-residue chain is Calcium-transporting ATPase type 2C member 1 (953 aa).

The Cytoplasmic segment spans residues 1 to 104 (MDNLLPQSRF…NEFDISEDEP (104 aa)). The chain crosses the membrane as a helical span at residues 105–125 (LWKKYISQFKNPLIMLLLASA). At 126-138 (VISVLMHQFDDAV) the chain is on the lumenal side. Residues 139-157 (SITVAILIVVTVAFVQEYR) traverse the membrane as a helical segment. Residues 158 to 296 (SEKSLEELSK…APKTPLQKSM (139 aa)) lie on the Cytoplasmic side of the membrane. The chain crosses the membrane as a helical span at residues 297–316 (DLLGKQLSFYSFGIIGIIML). At 317-328 (VGWLLGKDILEM) the chain is on the lumenal side. A helical transmembrane segment spans residues 329–346 (FTISVSLAVAAIPEGLPI). 4 residues coordinate Ca(2+): valine 337, alanine 338, isoleucine 340, and glutamate 342. Topologically, residues 347–733 (VVTVTLALGV…EEGKGIYNNI (387 aa)) are cytoplasmic. Aspartate 384 acts as the 4-aspartylphosphate intermediate in catalysis. The Mg(2+) site is built by aspartate 678 and aspartate 682. A helical membrane pass occupies residues 734 to 753 (KNFVRFQLSTSIAALTLISL). Over 754 to 763 (ATLMNFPNPL) the chain is Lumenal. Residues 764–784 (NAMQILWINIIMDGPPAQSLG) form a helical membrane-spanning segment. Residues asparagine 772 and aspartate 776 each coordinate Ca(2+). The Cytoplasmic portion of the chain corresponds to 785-804 (VEPVDKDVIRKPPRNWKDSI). The helical transmembrane segment at 805–824 (LTKNLILKILVSSIIIVCGT) threads the bilayer. Residues 825 to 842 (LFVFWRELRDNVITPRDT) lie on the Lumenal side of the membrane. Residues 843 to 862 (TMTFTCFVFFDMFNALSSRS) traverse the membrane as a helical segment. Residues 863–875 (QTKSVFEIGLCSN) lie on the Cytoplasmic side of the membrane. Residues 876-894 (KMFCYAVLGSIMGQLLVIY) traverse the membrane as a helical segment. Topologically, residues 895 to 909 (FPPLQKVFQTESLSI) are lumenal. Residues 910–930 (LDLLFLLGLTSSVCIVAEIIK) traverse the membrane as a helical segment. At 931–953 (KVERSREKIQKPVSSTSSSFLEV) the chain is on the cytoplasmic side.

The protein belongs to the cation transport ATPase (P-type) (TC 3.A.3) family. Type IIA subfamily. As to quaternary structure, monomer. Homodimer.

Its subcellular location is the golgi apparatus. It localises to the trans-Golgi network membrane. The protein localises to the golgi stack membrane. The catalysed reaction is Ca(2+)(in) + ATP + H2O = Ca(2+)(out) + ADP + phosphate + H(+). The enzyme catalyses Mn(2+)(in) + ATP + H2O = Mn(2+)(out) + ADP + phosphate + H(+). ATP-driven pump that supplies the Golgi apparatus with Ca(2+) and Mn(2+) ions, both essential cofactors for processing and trafficking of newly synthesized proteins in the secretory pathway. Within a catalytic cycle, acquires Ca(2+) or Mn(2+) ions on the cytoplasmic side of the membrane and delivers them to the lumenal side. The transfer of ions across the membrane is coupled to ATP hydrolysis and is associated with a transient phosphorylation that shifts the pump conformation from inward-facing to outward-facing state. Plays a primary role in the maintenance of Ca(2+) homeostasis in the trans-Golgi compartment with a functional impact on Golgi and post-Golgi protein sorting as well as a structural impact on cisternae morphology. Responsible for loading the Golgi stores with Ca(2+) ions in keratinocytes, contributing to keratinocyte differentiation and epidermis integrity. Participates in Ca(2+) and Mn(2+) ions uptake into the Golgi store of hippocampal neurons and regulates protein trafficking required for neural polarity. May also play a role in the maintenance of Ca(2+) and Mn(2+) homeostasis and signaling in the cytosol while preventing cytotoxicity. The polypeptide is Calcium-transporting ATPase type 2C member 1 (ATP2C1) (Bos taurus (Bovine)).